The following is a 155-amino-acid chain: Fibroblast growth factor 1 (155 aa).

Positions 1–15 (MAEGEITTFTALTER) are excised as a propeptide. Asn33 lines the heparin pocket. The segment at 127-143 (KKNGNSKLGPRTHYGQK) is heparin-binding.

Belongs to the heparin-binding growth factors family.

The protein resides in the secreted. It localises to the cytoplasm. The protein localises to the cell cortex. Its subcellular location is the cytosol. It is found in the nucleus. Functionally, plays an important role in the regulation of cell survival, cell division, angiogenesis, cell differentiation and cell migration. Functions as a potent mitogen in vitro. Acts as a ligand for FGFR1 and integrins. Binds to FGFR1 in the presence of heparin leading to FGFR1 dimerization and activation via sequential autophosphorylation on tyrosine residues which act as docking sites for interacting proteins, leading to the activation of several signaling cascades. Binds to integrins. Its binding to integrins and subsequent ternary complex formation with integrins and FGFR1 are essential for FGF1 signaling. This Gallus gallus (Chicken) protein is Fibroblast growth factor 1 (FGF1).